Here is a 232-residue protein sequence, read N- to C-terminus: 7-cyano-7-deazaguanine synthase (232 aa).

8–18 (FSGGQDSTTCL) contacts ATP. Zn(2+) contacts are provided by cysteine 189, cysteine 198, cysteine 201, and cysteine 204.

It belongs to the QueC family. The cofactor is Zn(2+).

It carries out the reaction 7-carboxy-7-deazaguanine + NH4(+) + ATP = 7-cyano-7-deazaguanine + ADP + phosphate + H2O + H(+). It functions in the pathway purine metabolism; 7-cyano-7-deazaguanine biosynthesis. In terms of biological role, catalyzes the ATP-dependent conversion of 7-carboxy-7-deazaguanine (CDG) to 7-cyano-7-deazaguanine (preQ(0)). This is 7-cyano-7-deazaguanine synthase from Yersinia enterocolitica serotype O:8 / biotype 1B (strain NCTC 13174 / 8081).